A 380-amino-acid chain; its full sequence is Dynactin subunit 2 (380 aa).

The segment at 1 to 32 (MADPKFQNLPGIAYDQPDVYETPDDPELDTSD) is disordered. The segment covering 21–32 (ETPDDPELDTSD) has biased composition (acidic residues). Phosphoserine is present on residues Ser49, Ser58, and Ser86. 2 coiled-coil regions span residues 100 to 135 (VQKC…QSYD) and 353 to 377 (ETFA…AAIS).

Belongs to the dynactin subunit 2 family. As to quaternary structure, subunit of dynactin, a multiprotein complex associated with dynein.

The protein localises to the cytoplasm. The protein resides in the cytoskeleton. It is found in the membrane. Modulates cytoplasmic dynein binding to an organelle, and plays a role in prometaphase chromosome alignment and spindle organization during mitosis. May play a role in synapse formation during brain development. This Drosophila melanogaster (Fruit fly) protein is Dynactin subunit 2.